Reading from the N-terminus, the 1854-residue chain is Calcium-channel protein cch1 (1854 aa).

Positions 1-15 (MSSSSNSDPSSSPDN) are enriched in low complexity. A disordered region spans residues 1 to 33 (MSSSSNSDPSSSPDNTDFIPLKDNPKDTSSYIN). A glycan (N-linked (GlcNAc...) asparagine) is linked at Asn40. A run of 3 helical transmembrane segments spans residues 184–204 (HPLY…LLMI), 220–240 (IIVI…LFGF), and 274–294 (DFVA…QGIF). Asn310 carries an N-linked (GlcNAc...) asparagine glycan. A run of 8 helical transmembrane segments spans residues 328–348 (PLVQ…ILGV), 427–447 (FFNS…TDIM), 461–481 (LFII…IAVV), 514–534 (YLFY…VTLC), 549–569 (LIFY…RFFA), 581–601 (YTNL…LPSI), 606–626 (VAFG…ILLI), and 642–662 (QLLN…LCAV). Asn699 is a glycosylation site (N-linked (GlcNAc...) asparagine). The chain crosses the membrane as a helical span at residues 723-743 (FFTLWFLFSNNVVLSMFIAVI). Residue Asn786 is glycosylated (N-linked (GlcNAc...) asparagine). The next 3 helical transmembrane spans lie at 946-966 (VFIY…TPIY), 980-1000 (FVWT…IKII), and 1021-1041 (FFVL…HALL). N-linked (GlcNAc...) asparagine glycosylation is present at Asn1058. The next 2 helical transmembrane spans lie at 1075–1095 (FFKI…FALW) and 1148–1168 (FPHA…VDIM). N-linked (GlcNAc...) asparagine glycosylation occurs at Asn1184. The next 4 membrane-spanning stretches (helical) occupy residues 1193-1213 (FVLF…AIII), 1274-1294 (FTGL…PCPI), 1302-1322 (SIFL…VYGL), and 1331-1351 (FWNM…IAIL). Asn1356 carries N-linked (GlcNAc...) asparagine glycosylation. Transmembrane regions (helical) follow at residues 1358-1378 (SLTL…IPKF), 1393-1413 (PSIF…AIAF), and 1486-1506 (FIAW…TVVF). Residues Asn1508 and Asn1773 are each glycosylated (N-linked (GlcNAc...) asparagine). The disordered stretch occupies residues 1764 to 1792 (TIASGEGDDNHSVEDHLKVPTDNEPRRSP). A compositionally biased stretch (basic and acidic residues) spans 1771–1790 (DDNHSVEDHLKVPTDNEPRR).

This sequence belongs to the calcium channel alpha-1 subunit (TC 1.A.1.11) family. In terms of assembly, interacts with yam8 to form a Ca(2+) influx channel.

It localises to the cell membrane. Functionally, voltage-gated, high-affinity calcium channel that functions together with yam8 to mediate calcium entry into cells. Required during conditions of environmental stress. The chain is Calcium-channel protein cch1 (cch1) from Schizosaccharomyces pombe (strain 972 / ATCC 24843) (Fission yeast).